Consider the following 597-residue polypeptide: Glutamine--fructose-6-phosphate aminotransferase [isomerizing] (597 aa).

Catalysis depends on Cys-2, which acts as the Nucleophile; for GATase activity. Residues Cys-2–Glu-218 form the Glutamine amidotransferase type-2 domain. SIS domains are found at residues Ile-276–Thr-416 and Leu-449–Pro-587. Residue Lys-592 is the For Fru-6P isomerization activity of the active site.

As to quaternary structure, homodimer.

Its subcellular location is the cytoplasm. It carries out the reaction D-fructose 6-phosphate + L-glutamine = D-glucosamine 6-phosphate + L-glutamate. Its function is as follows. Catalyzes the first step in hexosamine metabolism, converting fructose-6P into glucosamine-6P using glutamine as a nitrogen source. This is Glutamine--fructose-6-phosphate aminotransferase [isomerizing] from Helicobacter pylori (strain J99 / ATCC 700824) (Campylobacter pylori J99).